A 224-amino-acid chain; its full sequence is Octanoyltransferase (224 aa).

Positions 45–223 (PSNKQAVWML…SLNKRFGLLW (179 aa)) constitute a BPL/LPL catalytic domain. Residues 87–94 (RGGDVTHH), 154–156 (SIG), and 167–169 (GIA) contribute to the substrate site. The Acyl-thioester intermediate role is filled by Cys185.

The protein belongs to the LipB family.

It is found in the cytoplasm. The enzyme catalyses octanoyl-[ACP] + L-lysyl-[protein] = N(6)-octanoyl-L-lysyl-[protein] + holo-[ACP] + H(+). It functions in the pathway protein modification; protein lipoylation via endogenous pathway; protein N(6)-(lipoyl)lysine from octanoyl-[acyl-carrier-protein]: step 1/2. Catalyzes the transfer of endogenously produced octanoic acid from octanoyl-acyl-carrier-protein onto the lipoyl domains of lipoate-dependent enzymes. Lipoyl-ACP can also act as a substrate although octanoyl-ACP is likely to be the physiological substrate. The polypeptide is Octanoyltransferase (Prochlorococcus marinus (strain SARG / CCMP1375 / SS120)).